The following is a 243-amino-acid chain: tRNA (guanine-N(1)-)-methyltransferase (243 aa).

S-adenosyl-L-methionine-binding positions include G108 and 127-132 (LGDFVL).

The protein belongs to the RNA methyltransferase TrmD family. In terms of assembly, homodimer.

The protein localises to the cytoplasm. It catalyses the reaction guanosine(37) in tRNA + S-adenosyl-L-methionine = N(1)-methylguanosine(37) in tRNA + S-adenosyl-L-homocysteine + H(+). Specifically methylates guanosine-37 in various tRNAs. The protein is tRNA (guanine-N(1)-)-methyltransferase of Streptococcus equi subsp. equi (strain 4047).